A 149-amino-acid polypeptide reads, in one-letter code: NPC intracellular cholesterol transporter 2 (149 aa).

The first 19 residues, 1 to 19 (MRFLAATILLLALVAASQA), serve as a signal peptide directing secretion. Intrachain disulfides connect cysteine 27–cysteine 140, cysteine 42–cysteine 47, and cysteine 93–cysteine 99. Asparagine 58 and asparagine 69 each carry an N-linked (GlcNAc...) asparagine glycan. Lysine 116 is modified (N6-acetyllysine).

Belongs to the NPC2 family. As to quaternary structure, interacts with NPC1 (via the second lumenal domain) in a cholestrol-dependent manner. Interacts with NUS1/NgBR, the interaction stabilizes NCP2 and regulates cholesterol trafficking. Interacts with DHDDS. Interacts with NEDD4L (via C2 domain). Interacts with NPC1L1. Post-translationally, N-glycosylated. As to expression, detected in liver and bile. Detected in epididymis (at protein level). Detected in caput epididymis, corpus epididymis, cauda epididymis and ovary.

It is found in the secreted. It localises to the endoplasmic reticulum. The protein localises to the lysosome. The enzyme catalyses cholesterol(in) = cholesterol(out). Functionally, intracellular cholesterol transporter which acts in concert with NPC1 and plays an important role in the egress of cholesterol from the lysosomal compartment. Unesterified cholesterol that has been released from LDLs in the lumen of the late endosomes/lysosomes is transferred by NPC2 to the cholesterol-binding pocket in the N-terminal domain of NPC1. May bind and mobilize cholesterol that is associated with membranes. NPC2 binds cholesterol with a 1:1 stoichiometry. Can bind a variety of sterols, including lathosterol, desmosterol and the plant sterols stigmasterol and beta-sitosterol. The secreted form of NCP2 regulates biliary cholesterol secretion via stimulation of ABCG5/ABCG8-mediated cholesterol transport. The chain is NPC intracellular cholesterol transporter 2 from Mus musculus (Mouse).